The primary structure comprises 524 residues: Homeobox protein engrailed-like SMOX-2 (524 aa).

The segment at 194–218 (SSSSSSSSSSSSSSSSSSCSTNSSS) is disordered. Positions 423 to 482 (LKRPRTSFTVPQLKRLSQEFEKNRYLDELRRKKLATELDLRESQVKIWFQNKRAKTKKAS) form a DNA-binding region, homeobox.

The protein belongs to the engrailed homeobox family.

The protein resides in the nucleus. The sequence is that of Homeobox protein engrailed-like SMOX-2 (SMOX-2) from Schistosoma mansoni (Blood fluke).